Reading from the N-terminus, the 236-residue chain is Eukaryotic translation initiation factor 3 subunit J (236 aa).

The interval 20 to 88 (ANNINKWEGE…AEEEKRLANL (69 aa)) is disordered. Over residues 28 to 46 (GEDDDEDVKESWEDEEEKK) the composition is skewed to acidic residues. Basic and acidic residues-rich tracts occupy residues 47–58 (DEEKPTKTEVPV) and 68–88 (AKLEEEERLREAEEEKRLANL).

Belongs to the eIF-3 subunit J family. As to quaternary structure, component of the eukaryotic translation initiation factor 3 (eIF-3) complex. The eIF-3 complex interacts with pix.

The protein resides in the cytoplasm. Functionally, component of the eukaryotic translation initiation factor 3 (eIF-3) complex, which is involved in protein synthesis of a specialized repertoire of mRNAs and, together with other initiation factors, stimulates binding of mRNA and methionyl-tRNAi to the 40S ribosome. The eIF-3 complex specifically targets and initiates translation of a subset of mRNAs involved in cell proliferation. The chain is Eukaryotic translation initiation factor 3 subunit J from Drosophila willistoni (Fruit fly).